Reading from the N-terminus, the 630-residue chain is Alpha-1,3-mannosyltransferase MNT3 (630 aa).

At 1-14 the chain is on the cytoplasmic side; that stretch reads MLKSLKSRRLILKR. A helical; Signal-anchor for type II membrane protein membrane pass occupies residues 15 to 31; sequence LVTLLLSLFFSYLIFSA. Residues 32–630 lie on the Lumenal side of the membrane; sequence SRNVTSSNKL…NDISRTWNAN (599 aa). Residues Asn34 and Asn168 are each glycosylated (N-linked (GlcNAc...) asparagine).

Belongs to the MNN1/MNT family.

The protein resides in the golgi apparatus membrane. The protein operates within protein modification; protein glycosylation. Its function is as follows. Mannosyltransferase involved in adding the 4th and 5th mannose residues of O-linked glycans. The polypeptide is Alpha-1,3-mannosyltransferase MNT3 (MNT3) (Saccharomyces cerevisiae (strain ATCC 204508 / S288c) (Baker's yeast)).